We begin with the raw amino-acid sequence, 193 residues long: Holliday junction branch migration complex subunit RuvA (193 aa).

Positions 1 to 64 (MIGRIAGILL…EDAHLLYGFL (64 aa)) are domain I. Residues 65–139 (TPQERTTFRE…GKLGADLGAL (75 aa)) form a domain II region. The segment at 139-143 (LAGAA) is flexible linker. The tract at residues 144-193 (SPSDHAADILNALVALGYSEKEGLAAIKNVPAGTGVSDGIKLALKALSKA) is domain III.

The protein belongs to the RuvA family. As to quaternary structure, homotetramer. Forms an RuvA(8)-RuvB(12)-Holliday junction (HJ) complex. HJ DNA is sandwiched between 2 RuvA tetramers; dsDNA enters through RuvA and exits via RuvB. An RuvB hexamer assembles on each DNA strand where it exits the tetramer. Each RuvB hexamer is contacted by two RuvA subunits (via domain III) on 2 adjacent RuvB subunits; this complex drives branch migration. In the full resolvosome a probable DNA-RuvA(4)-RuvB(12)-RuvC(2) complex forms which resolves the HJ.

Its subcellular location is the cytoplasm. Its function is as follows. The RuvA-RuvB-RuvC complex processes Holliday junction (HJ) DNA during genetic recombination and DNA repair, while the RuvA-RuvB complex plays an important role in the rescue of blocked DNA replication forks via replication fork reversal (RFR). RuvA specifically binds to HJ cruciform DNA, conferring on it an open structure. The RuvB hexamer acts as an ATP-dependent pump, pulling dsDNA into and through the RuvAB complex. HJ branch migration allows RuvC to scan DNA until it finds its consensus sequence, where it cleaves and resolves the cruciform DNA. The polypeptide is Holliday junction branch migration complex subunit RuvA (Burkholderia vietnamiensis (strain G4 / LMG 22486) (Burkholderia cepacia (strain R1808))).